The following is a 32-amino-acid chain: VACVYRTCDKDCTSRKYRSGKCINNACKCYPY.

3 disulfides stabilise this stretch: C3–C22, C8–C12, and C27–C29. At Y32 the chain carries Tyrosine amide.

This sequence belongs to the short scorpion toxin superfamily. Potassium channel inhibitor family. Alpha-KTx 10 subfamily. Expressed by the venom gland.

It localises to the secreted. In terms of biological role, blocks Shaker B potassium-channels (Kv1.1/KCNA1 sub-family). In Centruroides noxius (Mexican scorpion), this protein is Potassium channel toxin alpha-KTx 10.2.